The primary structure comprises 105 residues: Thioredoxin (105 aa).

Residues 2–105 (VKQIDSKDAF…KLEATINEFV (104 aa)) enclose the Thioredoxin domain. K3 carries the post-translational modification N6-acetyllysine. K8 is subject to N6-succinyllysine. Catalysis depends on nucleophile residues C32 and C35. C32 and C35 are oxidised to a cystine. At K39 the chain carries N6-acetyllysine. S-nitrosocysteine occurs at positions 62 and 69. An S-nitrosocysteine; alternate modification is found at C73. An N6-acetyllysine; alternate modification is found at K94. K94 is modified (N6-succinyllysine; alternate).

It belongs to the thioredoxin family. In terms of assembly, homodimer; disulfide-linked. Interacts with TXNIP through the redox-active site. Interacts with MAP3K5 and CASP3. Interacts with APEX1; the interaction stimulates the FOS/JUN AP-1 DNA-binding activity in a redox-dependent manner. Post-translationally, in the fully reduced protein, both Cys-69 and Cys-73 are nitrosylated in response to nitric oxide (NO). When two disulfide bonds are present in the protein, only Cys-73 is nitrosylated. Cys-73 can serve as donor for nitrosylation of target proteins.

Its subcellular location is the nucleus. The protein resides in the cytoplasm. It is found in the secreted. Participates in various redox reactions through the reversible oxidation of its active center dithiol to a disulfide and catalyzes dithiol-disulfide exchange reactions. Plays a role in the reversible S-nitrosylation of cysteine residues in target proteins, and thereby contributes to the response to intracellular nitric oxide. Nitrosylates the active site Cys of CASP3 in response to nitric oxide (NO), and thereby inhibits caspase-3 activity. Induces the FOS/JUN AP-1 DNA binding activity in ionizing radiation (IR) cells through its oxidation/reduction status and stimulates AP-1 transcriptional activity. This Callithrix jacchus (White-tufted-ear marmoset) protein is Thioredoxin (TXN).